The following is an 823-amino-acid chain: Degenerin-like protein asic-1 (823 aa).

The Cytoplasmic portion of the chain corresponds to 1 to 38 (MGKNSLKRALELDVVDFAEHTSAHGIPRAYVSTGWRRY). A helical transmembrane segment spans residues 39-59 (MWLLCFLFCLSCFGHQAYLIV). At 60-767 (ERFNRNDIIV…FGGQLGLWMG (708 aa)) the chain is on the extracellular side. Intrachain disulfides connect Cys86-Cys518 and Cys494-Cys501. Asn228, Asn326, Asn347, Asn415, and Asn486 each carry an N-linked (GlcNAc...) asparagine glycan. Residues Asn527 and Asn546 are each glycosylated (N-linked (GlcNAc...) asparagine). 4 disulfide bridges follow: Cys604/Cys687, Cys625/Cys683, Cys629/Cys681, and Cys638/Cys664. Residues 767–769 (GVS) carry the GAS motif; ion selectivity filter motif. Residues 768–788 (VSVITIGEVACFFFEVFISLI) form a helical membrane-spanning segment. Over 789 to 795 (SSNRTKR) the chain is Cytoplasmic.

This sequence belongs to the amiloride-sensitive sodium channel (TC 1.A.6) family. As to quaternary structure, homotrimer. Heterotrimer; with other ASIC proteins producing channel with different properties.

It localises to the cell membrane. The protein resides in the postsynaptic cell membrane. The protein localises to the cell projection. Its subcellular location is the dendrite. It carries out the reaction Na(+)(in) = Na(+)(out). The catalysed reaction is K(+)(in) = K(+)(out). It catalyses the reaction Li(+)(in) = Li(+)(out). The enzyme catalyses Ca(2+)(in) = Ca(2+)(out). In terms of biological role, forms voltage-independent, pH-gated trimeric sodium channels that act as postsynaptic excitatory receptors in the nervous system, playing a crucial role in regulating synaptic plasticity, learning, and memory. Promotes synaptic vesicle fusion to positively regulate the release of dopamine at dopaminergic neuron synapses. Displays high selectivity for sodium ions but can also permit the permeation of other cations. The protein is Degenerin-like protein asic-1 of Caenorhabditis elegans.